Reading from the N-terminus, the 399-residue chain is Maltose excess protein 1-like, chloroplastic (399 aa).

A chloroplast-targeting transit peptide spans 1–67 (MSSSVSSVRL…RRRRYALPPV (67 aa)). The next 9 helical transmembrane spans lie at 93–113 (FAGAANVPFLLLQLPQIILNA), 123–143 (ALFAVPWLGMLTGLLGNLSLL), 154–174 (AVIVQTLGVISTYVVIAQLAM), 180–202 (LPQFVATSAVVAAGLLLNFLNYF), 217–237 (ITIGGLAVLPQVMWSTFVPFI), 238–258 (PNSLLPGIISGSLAATAVVMA), 268–288 (INFVGSLSGWTATLLFMWMPV), 306–326 (AFTMLLAMIGNGLMIPRAVFI), and 361–381 (FLATTFGLLLWLGFTLWRDTI).

The protein localises to the plastid. It localises to the chloroplast inner membrane. Its function is as follows. Probable maltose transporter. Essential for the conversion of starch to sucrose in leaves at night, probably via the export of maltose from the chloroplast. This chain is Maltose excess protein 1-like, chloroplastic, found in Oryza sativa subsp. japonica (Rice).